The chain runs to 172 residues: L-methionine sulfoximine/L-methionine sulfone acetyltransferase (172 aa).

The region spanning 3–166 (ASIRDAGVAD…DLTFMQLNLD (164 aa)) is the N-acetyltransferase domain. Substrate is bound by residues 75–77 (RPF) and 85–87 (EHS). Acetyl-CoA-binding positions include 88–90 (VYV), 96–101 (GKGLGV), and asparagine 127.

Homodimer.

It carries out the reaction L-methionine sulfoximine + acetyl-CoA = N-acetyl-L-methionine sulfoximine + CoA + H(+). The catalysed reaction is L-methionine sulfone + acetyl-CoA = N-acetyl-L-methionine sulfone + CoA + H(+). Its function is as follows. Plays a role in the resistance against the toxic effects of L-methionine sulfoximine (MSX), a rare amino acid, which inhibits glutamine synthetase (GlnA). Catalyzes the acetylation of L-methionine sulfoximine (MSX). The sequence is that of L-methionine sulfoximine/L-methionine sulfone acetyltransferase from Pseudomonas aeruginosa (strain ATCC 15692 / DSM 22644 / CIP 104116 / JCM 14847 / LMG 12228 / 1C / PRS 101 / PAO1).